A 512-amino-acid chain; its full sequence is ATP synthase subunit alpha, chloroplastic (512 aa).

An ATP-binding site is contributed by 170 to 177 (GDRQTGKT).

It belongs to the ATPase alpha/beta chains family. As to quaternary structure, F-type ATPases have 2 components, CF(1) - the catalytic core - and CF(0) - the membrane proton channel. CF(1) has five subunits: alpha(3), beta(3), gamma(1), delta(1), epsilon(1). CF(0) has four main subunits: a, b, b' and c.

The protein localises to the plastid. It is found in the chloroplast thylakoid membrane. It carries out the reaction ATP + H2O + 4 H(+)(in) = ADP + phosphate + 5 H(+)(out). Functionally, produces ATP from ADP in the presence of a proton gradient across the membrane. The alpha chain is a regulatory subunit. The protein is ATP synthase subunit alpha, chloroplastic of Staurastrum punctulatum (Green alga).